We begin with the raw amino-acid sequence, 221 residues long: Flagellar L-ring protein 2 (221 aa).

The signal sequence occupies residues 1-16 (MKRFLILTPMVLALCG). Residue Cys17 is the site of N-palmitoyl cysteine attachment. Cys17 is lipidated: S-diacylglycerol cysteine.

The protein belongs to the FlgH family. As to quaternary structure, the basal body constitutes a major portion of the flagellar organelle and consists of four rings (L,P,S, and M) mounted on a central rod.

It is found in the cell outer membrane. Its subcellular location is the bacterial flagellum basal body. In terms of biological role, assembles around the rod to form the L-ring and probably protects the motor/basal body from shearing forces during rotation. The protein is Flagellar L-ring protein 2 of Yersinia pseudotuberculosis serotype I (strain IP32953).